Consider the following 629-residue polypeptide: tRNA uridine 5-carboxymethylaminomethyl modification enzyme MnmG (629 aa).

FAD-binding positions include 13-18 (GGGHAG), Val-125, and Ser-180. 273-287 (GPRYCPSIEDKIHRF) is an NAD(+) binding site. Residue Gln-370 coordinates FAD.

The protein belongs to the MnmG family. As to quaternary structure, homodimer. Heterotetramer of two MnmE and two MnmG subunits. FAD is required as a cofactor.

It is found in the cytoplasm. NAD-binding protein involved in the addition of a carboxymethylaminomethyl (cmnm) group at the wobble position (U34) of certain tRNAs, forming tRNA-cmnm(5)s(2)U34. The chain is tRNA uridine 5-carboxymethylaminomethyl modification enzyme MnmG from Shewanella sp. (strain ANA-3).